A 198-amino-acid chain; its full sequence is Recombination protein RecR (198 aa).

The C4-type zinc-finger motif lies at 57-72 (CSVCGHITDQDPCYIC). In terms of domain architecture, Toprim spans 80-175 (SVICVVQDPK…KLSRIAHGLP (96 aa)).

The protein belongs to the RecR family.

May play a role in DNA repair. It seems to be involved in an RecBC-independent recombinational process of DNA repair. It may act with RecF and RecO. This is Recombination protein RecR from Bacillus licheniformis (strain ATCC 14580 / DSM 13 / JCM 2505 / CCUG 7422 / NBRC 12200 / NCIMB 9375 / NCTC 10341 / NRRL NRS-1264 / Gibson 46).